A 547-amino-acid chain; its full sequence is Apicoplast pyruvate carrier 1 (547 aa).

Residues 1–33 (MEPRAPPRLSVSSPRRESGATVPSHSPSTLLSC) are disordered. Over 1-45 (MEPRAPPRLSVSSPRRESGATVPSHSPSTLLSCASSETATEKRRR) the chain is Cytoplasmic. The span at 21–33 (TVPSHSPSTLLSC) shows a compositional bias: polar residues. 12 consecutive transmembrane segments (helical) span residues 46–66 (WTGV…GTVY), 126–146 (AWVL…GGIA), 167–187 (VGMA…FGVI), 189–209 (GVGL…WFPE), 212–232 (GIVS…FSPL), 278–298 (LLAV…RVPA), 345–365 (ALVS…GLAI), 385–405 (ILTE…NAVG), 417–437 (GFQT…FFLP), 445–465 (LCYA…FSVF), 467–487 (SAVA…FIFG), and 515–535 (LMGL…ALSP).

The protein belongs to the major facilitator superfamily. Interacts with apicoplast pyruvate carrier 2.

It is found in the plastid. The protein localises to the apicoplast. The protein resides in the membrane. Its function is as follows. Along with apicoplast pyruvate carrier 2, forms apicoplast pyruvate carrier (APC) complex, which transports pyruvate into the apicoplast and may also transport amino acids like methionine, serine, glycine and tryptophan with low efficiency. Required for maintaining pyruvate-dependent metabolic activities in the apicoplast, such as synthesis of fatty acids, isopentenyl pyrophosphate (IPP), dimethylallyl pyrophosphate (DMAPP) and methylerythritol 4-phosphate (MEP). Required for maintaining the integrity of the apicoplast. Required for normal parasite growth. This chain is Apicoplast pyruvate carrier 1, found in Toxoplasma gondii.